The primary structure comprises 278 residues: Large ribosomal subunit protein uL2 (278 aa).

The tract at residues 222–278 (GVVMNPIDHPHGGGEGRTSGGRHPVTPWGKPTKGKKTRSNKSTDKFILISRHKRKKK) is disordered.

It belongs to the universal ribosomal protein uL2 family. In terms of assembly, part of the 50S ribosomal subunit. Forms a bridge to the 30S subunit in the 70S ribosome.

Its function is as follows. One of the primary rRNA binding proteins. Required for association of the 30S and 50S subunits to form the 70S ribosome, for tRNA binding and peptide bond formation. It has been suggested to have peptidyltransferase activity; this is somewhat controversial. Makes several contacts with the 16S rRNA in the 70S ribosome. This Rhodopseudomonas palustris (strain ATCC BAA-98 / CGA009) protein is Large ribosomal subunit protein uL2.